Here is a 421-residue protein sequence, read N- to C-terminus: Tyrosine--tRNA ligase (421 aa).

Tyrosine 36 lines the L-tyrosine pocket. Residues 41-50 (PTADSLHIGH) carry the 'HIGH' region motif. The L-tyrosine site is built by tyrosine 170 and glutamine 174. The short motif at 231–235 (KFGKS) is the 'KMSKS' region element. Lysine 234 is an ATP binding site. Positions 353–420 (TNIVEALIET…KKKYFMVNYQ (68 aa)) constitute an S4 RNA-binding domain.

This sequence belongs to the class-I aminoacyl-tRNA synthetase family. TyrS type 1 subfamily. In terms of assembly, homodimer.

It is found in the cytoplasm. The catalysed reaction is tRNA(Tyr) + L-tyrosine + ATP = L-tyrosyl-tRNA(Tyr) + AMP + diphosphate + H(+). Its function is as follows. Catalyzes the attachment of tyrosine to tRNA(Tyr) in a two-step reaction: tyrosine is first activated by ATP to form Tyr-AMP and then transferred to the acceptor end of tRNA(Tyr). The polypeptide is Tyrosine--tRNA ligase (Staphylococcus epidermidis (strain ATCC 35984 / DSM 28319 / BCRC 17069 / CCUG 31568 / BM 3577 / RP62A)).